The following is a 196-amino-acid chain: UMP-CMP kinase (196 aa).

13–18 (GAGKGT) serves as a coordination point for ATP. S33 bears the Phosphoserine mark. Positions 33-63 (SAGELLRDERKNPDSQYGELIEKYIKEGKIV) are NMP. R39 is a binding site for a ribonucleoside 5'-phosphate. N6-acetyllysine occurs at positions 43 and 55. 61 to 63 (KIV) serves as a coordination point for a ribonucleoside 5'-phosphate. K73 is covalently cross-linked (Glycyl lysine isopeptide (Lys-Gly) (interchain with G-Cter in SUMO2)). A ribonucleoside 5'-phosphate is bound at residue 93-96 (GFPR). N100 serves as a coordination point for CMP. K106 is subject to N6-succinyllysine. Residues 133–143 (ERGKSSGRSDD) are LID. R134 provides a ligand contact to ATP. Residues R140 and R151 each coordinate a ribonucleoside 5'-phosphate. K179 contacts ATP. A Phosphoserine modification is found at S180.

The protein belongs to the adenylate kinase family. UMP-CMP kinase subfamily. As to quaternary structure, monomer. Mg(2+) serves as cofactor.

The protein localises to the nucleus. The protein resides in the cytoplasm. The catalysed reaction is CMP + ATP = CDP + ADP. It carries out the reaction dCMP + ATP = dCDP + ADP. The enzyme catalyses UMP + ATP = UDP + ADP. It catalyses the reaction a 2'-deoxyribonucleoside 5'-diphosphate + ATP = a 2'-deoxyribonucleoside 5'-triphosphate + ADP. The catalysed reaction is a ribonucleoside 5'-diphosphate + ATP = a ribonucleoside 5'-triphosphate + ADP. Its function is as follows. Catalyzes the phosphorylation of pyrimidine nucleoside monophosphates at the expense of ATP. Plays an important role in de novo pyrimidine nucleotide biosynthesis. Has preference for UMP and CMP as phosphate acceptors. Also displays broad nucleoside diphosphate kinase activity. The protein is UMP-CMP kinase (Cmpk1) of Rattus norvegicus (Rat).